Consider the following 303-residue polypeptide: Cyclin-dependent kinase B1-1 (303 aa).

The 292-residue stretch at 4–295 (YEKLEKVGEG…AKAAMEHPYF (292 aa)) folds into the Protein kinase domain. ATP-binding positions include 10–18 (VGEGTYGKV) and Lys-33. The residue at position 14 (Thr-14) is a Phosphothreonine. At Tyr-15 the chain carries Phosphotyrosine. The active-site Proton acceptor is the Asp-136. Thr-170 is modified (phosphothreonine).

Belongs to the protein kinase superfamily. CMGC Ser/Thr protein kinase family. CDC2/CDKX subfamily. As to expression, expressed in actively dividing cells: root and shoot apical meristems, and young leaves.

It catalyses the reaction L-seryl-[protein] + ATP = O-phospho-L-seryl-[protein] + ADP + H(+). It carries out the reaction L-threonyl-[protein] + ATP = O-phospho-L-threonyl-[protein] + ADP + H(+). The enzyme catalyses [DNA-directed RNA polymerase] + ATP = phospho-[DNA-directed RNA polymerase] + ADP + H(+). The polypeptide is Cyclin-dependent kinase B1-1 (CDKB1-1) (Oryza sativa subsp. japonica (Rice)).